Consider the following 203-residue polypeptide: Translation initiation factor IF-3 (203 aa).

Positions 168-203 (QLSPKKKESATKKPATPKPATPAAVKAEKPAGDNEE) are disordered. A compositionally biased stretch (basic and acidic residues) spans 193–203 (KAEKPAGDNEE).

This sequence belongs to the IF-3 family. As to quaternary structure, monomer.

It localises to the cytoplasm. Functionally, IF-3 binds to the 30S ribosomal subunit and shifts the equilibrium between 70S ribosomes and their 50S and 30S subunits in favor of the free subunits, thus enhancing the availability of 30S subunits on which protein synthesis initiation begins. The sequence is that of Translation initiation factor IF-3 from Bacteroides fragilis (strain ATCC 25285 / DSM 2151 / CCUG 4856 / JCM 11019 / LMG 10263 / NCTC 9343 / Onslow / VPI 2553 / EN-2).